Reading from the N-terminus, the 329-residue chain is UPF0725 protein EMB2204 (329 aa).

It belongs to the UPF0725 (EMB2204) family.

In terms of biological role, may be involved in embryogenesis. The chain is UPF0725 protein EMB2204 (EMB2204) from Arabidopsis thaliana (Mouse-ear cress).